The following is a 390-amino-acid chain: Transforming growth factor beta-1 proprotein (390 aa).

The first 29 residues, 1-29 (MPPSRLRLLPLLLPLLWLLVLAPGRPASG), serve as a signal peptide directing secretion. Residues 30 to 74 (LSTCKTIDMELVKRKRIEAIRGQILSKLRLASPPSQGDVPPGPLP) form a straightjacket domain region. Positions 75–271 (EAVLALYNST…ATPLERAQHL (197 aa)) are arm domain. 3 N-linked (GlcNAc...) asparagine glycosylation sites follow: Asn82, Asn136, and Asn176. A bowtie tail region spans residues 226–252 (DSKDNTLRVEINGIGPKRRGDLAAIHG). Positions 244-246 (RGD) match the Cell attachment site motif. Intrachain disulfides connect Cys285–Cys294, Cys293–Cys356, Cys322–Cys387, and Cys326–Cys389.

Belongs to the TGF-beta family. In terms of assembly, homodimer; disulfide-linked. Interacts with the serine proteases, HTRA1 and HTRA3: the interaction with either inhibits TGFB1-mediated signaling and the HTRA protease activity is required for this inhibition. May interact with THSD4; this interaction may lead to sequestration by FBN1 microfibril assembly and attenuation of TGFB signaling. Interacts with CD109, DPT and ASPN. Interacts with EFEMP2. Interacts with TSKU; the interaction contributes to regulation of the hair cycle. Interacts with TGFBR3. Homodimer; disulfide-linked. Interacts with transforming growth factor beta-1 (TGF-beta-1) chain; interaction is non-covalent and maintains TGF-beta-1 in a latent state; each latency-associated peptide (LAP) monomer interacts with TGF-beta-1 in the other monomer. Interacts with LTBP1; leading to regulation of TGF-beta-1 activation. Interacts with LRRC32/GARP; leading to regulation of TGF-beta-1 activation on the surface of activated regulatory T-cells (Tregs). Interacts with LRRC33/NRROS; leading to regulation of TGF-beta-1 in macrophages and microglia. Interacts (via cell attachment site) with integrins ITGAV and ITGB6 (ITGAV:ITGB6), leading to release of the active TGF-beta-1. Interacts with NREP; the interaction results in a decrease in TGFB1 autoinduction. Interacts with HSP90AB1; inhibits latent TGFB1 activation. As to quaternary structure, homodimer; disulfide-linked. Interacts with TGF-beta receptors (TGFBR1 and TGFBR2), leading to signal transduction. Post-translationally, transforming growth factor beta-1 proprotein: The precursor proprotein is cleaved in the Golgi apparatus by FURIN to form Transforming growth factor beta-1 (TGF-beta-1) and Latency-associated peptide (LAP) chains, which remain non-covalently linked, rendering TGF-beta-1 inactive. In terms of processing, N-glycosylated. Deglycosylation leads to activation of Transforming growth factor beta-1 (TGF-beta-1); mechanisms triggering deglycosylation-driven activation of TGF-beta-1 are however unclear.

The protein localises to the secreted. It localises to the extracellular space. The protein resides in the extracellular matrix. Its function is as follows. Transforming growth factor beta-1 proprotein: Precursor of the Latency-associated peptide (LAP) and Transforming growth factor beta-1 (TGF-beta-1) chains, which constitute the regulatory and active subunit of TGF-beta-1, respectively. Required to maintain the Transforming growth factor beta-1 (TGF-beta-1) chain in a latent state during storage in extracellular matrix. Associates non-covalently with TGF-beta-1 and regulates its activation via interaction with 'milieu molecules', such as LTBP1, LRRC32/GARP and LRRC33/NRROS, that control activation of TGF-beta-1. Interaction with LRRC33/NRROS regulates activation of TGF-beta-1 in macrophages and microglia. Interaction with LRRC32/GARP controls activation of TGF-beta-1 on the surface of activated regulatory T-cells (Tregs). Interaction with integrins (ITGAV:ITGB6 or ITGAV:ITGB8) results in distortion of the Latency-associated peptide chain and subsequent release of the active TGF-beta-1. Functionally, multifunctional protein that regulates the growth and differentiation of various cell types and is involved in various processes, such as normal development, immune function, microglia function and responses to neurodegeneration. Activation into mature form follows different steps: following cleavage of the proprotein in the Golgi apparatus, Latency-associated peptide (LAP) and Transforming growth factor beta-1 (TGF-beta-1) chains remain non-covalently linked rendering TGF-beta-1 inactive during storage in extracellular matrix. At the same time, LAP chain interacts with 'milieu molecules', such as LTBP1, LRRC32/GARP and LRRC33/NRROS that control activation of TGF-beta-1 and maintain it in a latent state during storage in extracellular milieus. TGF-beta-1 is released from LAP by integrins (ITGAV:ITGB6 or ITGAV:ITGB8): integrin-binding to LAP stabilizes an alternative conformation of the LAP bowtie tail and results in distortion of the LAP chain and subsequent release of the active TGF-beta-1. Once activated following release of LAP, TGF-beta-1 acts by binding to TGF-beta receptors (TGFBR1 and TGFBR2), which transduce signal. While expressed by many cells types, TGF-beta-1 only has a very localized range of action within cell environment thanks to fine regulation of its activation by Latency-associated peptide chain (LAP) and 'milieu molecules'. Plays an important role in bone remodeling: acts as a potent stimulator of osteoblastic bone formation, causing chemotaxis, proliferation and differentiation in committed osteoblasts. Can promote either T-helper 17 cells (Th17) or regulatory T-cells (Treg) lineage differentiation in a concentration-dependent manner. At high concentrations, leads to FOXP3-mediated suppression of RORC and down-regulation of IL-17 expression, favoring Treg cell development. At low concentrations in concert with IL-6 and IL-21, leads to expression of the IL-17 and IL-23 receptors, favoring differentiation to Th17 cells. Stimulates sustained production of collagen through the activation of CREB3L1 by regulated intramembrane proteolysis (RIP). Mediates SMAD2/3 activation by inducing its phosphorylation and subsequent translocation to the nucleus. Positively regulates odontoblastic differentiation in dental papilla cells, via promotion of IPO7-mediated translocation of phosphorylated SMAD2 to the nucleus and subsequent transcription of target genes. Can induce epithelial-to-mesenchymal transition (EMT) and cell migration in various cell types. In Cavia porcellus (Guinea pig), this protein is Transforming growth factor beta-1 proprotein (TGFB1).